Here is a 54-residue protein sequence, read N- to C-terminus: uncharacterized protein (54 aa).

This is an uncharacterized protein from Haemophilus influenzae (strain ATCC 51907 / DSM 11121 / KW20 / Rd).